Consider the following 255-residue polypeptide: Probable transcriptional regulatory protein Rcas_0718 (255 aa).

It belongs to the TACO1 family.

The protein resides in the cytoplasm. This is Probable transcriptional regulatory protein Rcas_0718 from Roseiflexus castenholzii (strain DSM 13941 / HLO8).